Consider the following 431-residue polypeptide: MPNPRPGKPSAPSLALGPSPGASPSWRAAPKASDLLGARGPGGIFQGRDLRGGAHASSSSLNPMPPSQLQLPTLPLVMVAPSGARLGPLPHLQALLQDRPHFMHQLSTVDAHARTPVLQVHPLESPAMISLPPPTTATGVFSLKARPGLPPGINVASLEWVSREPALLCTFPNPGAPRKDSTLSAMPQSSYPLLANGVCKWPGCEKVFEEPEDFLKHCQADHLLDEKGRAQCLLQREMVQSLEQQLVLEKEKLSAMQAHLAGKMALTKASSVASSDKGSCCIVAAGSQGSAVPAWSGPREAPDSLFAVRRHLWGSHGNSTFPEFLHNMDYFKFHNMRPPFTYATLIRWAILEAPEKQRTLNEIYHWFTRMFAFFRNHPATWKNAIRHNLSLHKCFVRVESEKGAVWTVDELEFRKKRSQRPSRCSNPTPGP.

The segment at 1 to 68 (MPNPRPGKPS…SSLNPMPPSQ (68 aa)) is disordered. Residues 10–25 (SAPSLALGPSPGASPS) are compositionally biased toward low complexity. Ser-19 carries the phosphoserine; by CDK2 modification. Position 31 is an N6-acetyllysine (Lys-31). The short motif at 68–76 (QLQLPTLPL) is the Nuclear export signal element. The short motif at 92–96 (LQALL) is the LXXLL motif element. The segment at 106–190 (LSTVDAHART…STLSAMPQSS (85 aa)) is essential for transcriptional repressor activity and for interaction with KAT5 and HDAC7. The tract at residues 149 to 199 (LPPGINVASLEWVSREPALLCTFPNPGAPRKDSTLSAMPQSSYPLLANGVC) is interaction with IKZF4. A C2H2-type zinc finger spans residues 197-222 (GVCKWPGCEKVFEEPEDFLKHCQADH). A Nuclear export signal motif is present at residues 239-248 (VQSLEQQLVL). The leucine-zipper stretch occupies residues 239 to 260 (VQSLEQQLVLEKEKLSAMQAHL). Glycyl lysine isopeptide (Lys-Gly) (interchain with G-Cter in ubiquitin) cross-links involve residues Lys-250 and Lys-252. 2 positions are modified to N6-acetyllysine; alternate: Lys-263 and Lys-268. Glycyl lysine isopeptide (Lys-Gly) (interchain with G-Cter in ubiquitin); alternate cross-links involve residues Lys-263 and Lys-268. Residues 278-336 (GSCCIVAAGSQGSAVPAWSGPREAPDSLFAVRRHLWGSHGNSTFPEFLHNMDYFKFHNM) are interaction with RUNX1. The fork-head DNA-binding region spans 337 to 423 (RPPFTYATLI…RKKRSQRPSR (87 aa)). Lys-393 is covalently cross-linked (Glycyl lysine isopeptide (Lys-Gly) (interchain with G-Cter in ubiquitin)). Residues 414–417 (RKKR) carry the Nuclear localization signal motif. Ser-418 is subject to Phosphoserine. Residues 418–431 (SQRPSRCSNPTPGP) constitute a propeptide that is removed on maturation.

As to quaternary structure, homodimer. Dimerization is essential for its transcriptional regulator activity. Interacts with IKZF3. Interacts (via LXXLL motif) with RORA (via AF-2 motif). Interacts with HDAC9 in the absence of T-cell stimulation. Interacts with PPP1CA, PPP1CB, PPP1CG, KAT5, HDAC7, HSPA8, USP7, STUB1, HSPA1A/B, RUNX1, RUNX2, RUNX3, RELA, NFATC2, IKFZ4 and RORC. Post-translationally, phosphorylation at Ser-418 regulates its transcriptional repressor activity and consequently, regulatory T-cells (Treg) suppressive function. Phosphorylation by CDK2 negatively regulates its transcriptional activity and protein stability. Polyubiquitinated, leading to its proteasomal degradation in regulatory T-cells (Treg) which is mediated by STUB1 in a HSPA1A/B-dependent manner. Deubiquitinated by USP7 and USP44 leading to increase in protein stability. In terms of processing, acetylation on lysine residues stabilizes FOXP3 and promotes differentiation of T-cells into induced regulatory T-cells (iTregs) associated with suppressive functions. Acetylation is mediated by a coordinated action of KAT5 and EP300/p300 acetyltransferases: EP300/p300 is required to enhance KAT5 autoacetylation, promoting acetylation of FOXP3 by KAT5. Deacetylated by SIRT1. Post-translationally, undergoes proteolytic cleavage in activated regulatory T-cells (Treg), and can be cleaved at either the N- or C-terminal site, or at both sites.

The protein resides in the nucleus. The protein localises to the cytoplasm. Transcriptional regulator which is crucial for the development and inhibitory function of regulatory T-cells (Treg). Plays an essential role in maintaining homeostasis of the immune system by allowing the acquisition of full suppressive function and stability of the Treg lineage, and by directly modulating the expansion and function of conventional T-cells. Can act either as a transcriptional repressor or a transcriptional activator depending on its interactions with other transcription factors, histone acetylases and deacetylases. The suppressive activity of Treg involves the coordinate activation of many genes, including CTLA4 and TNFRSF18 by FOXP3 along with repression of genes encoding cytokines such as interleukin-2 (IL2) and interferon-gamma (IFNG). Inhibits cytokine production and T-cell effector function by repressing the activity of two key transcription factors, RELA and NFATC2. Mediates transcriptional repression of IL2 via its association with histone acetylase KAT5 and histone deacetylase HDAC7. Can activate the expression of TNFRSF18, IL2RA and CTLA4 and repress the expression of IL2 and IFNG via its association with transcription factor RUNX1. Inhibits the differentiation of IL17 producing helper T-cells (Th17) by antagonizing RORC function, leading to down-regulation of IL17 expression, favoring Treg development. Inhibits the transcriptional activator activity of RORA. Can repress the expression of IL2 and IFNG via its association with transcription factor IKZF4. The sequence is that of Forkhead box protein P3 (FOXP3) from Macaca fascicularis (Crab-eating macaque).